The following is a 1100-amino-acid chain: Lysylphosphatidylglycerol biosynthesis bifunctional protein LysX (1100 aa).

Residues 1–601 (MTPTSLARAR…LLHSDGTAPD (601 aa)) are phosphatidylglycerol lysyltransferase. The next 7 membrane-spanning stretches (helical) occupy residues 18 to 38 (VPAA…LASV), 60 to 80 (FPDT…ALAA), 84 to 104 (IAWW…IAGL), 112 to 132 (FAEV…AFLL), 154 to 174 (LVAS…LFPG), 206 to 226 (VFVN…TAIV), and 314 to 332 (AYGW…AQAF). Residues 602 to 1100 (GMGLQADLAD…TLPFPLAKPR (499 aa)) are lysine--tRNA ligase. The OB DNA-binding region spans 661–739 (VAVAGRVLRS…SLLVSGWRLI (79 aa)). Mg(2+) contacts are provided by Asp1012 and Glu1019.

It in the N-terminal section; belongs to the LPG synthetase family. The protein in the C-terminal section; belongs to the class-II aminoacyl-tRNA synthetase family. Requires Mg(2+) as cofactor.

The protein resides in the cell membrane. The catalysed reaction is tRNA(Lys) + L-lysine + ATP = L-lysyl-tRNA(Lys) + AMP + diphosphate. The enzyme catalyses L-lysyl-tRNA(Lys) + a 1,2-diacyl-sn-glycero-3-phospho-(1'-sn-glycerol) = a 1,2-diacyl-sn-glycero-3-phospho-1'-(3'-O-L-lysyl)-sn-glycerol + tRNA(Lys). Catalyzes the production of L-lysyl-tRNA(Lys)transfer and the transfer of a lysyl group from L-lysyl-tRNA(Lys) to membrane-bound phosphatidylglycerol (PG), which produces lysylphosphatidylglycerol (LPG), one of the components of the bacterial membrane with a positive net charge. LPG synthesis contributes to the resistance to cationic antimicrobial peptides (CAMPs) and likely protects M.tuberculosis against the CAMPs produced by competiting microorganisms (bacteriocins). In fact, the modification of anionic phosphatidylglycerol with positively charged L-lysine results in repulsion of the peptides. This is Lysylphosphatidylglycerol biosynthesis bifunctional protein LysX (lysX) from Mycolicibacterium vanbaalenii (strain DSM 7251 / JCM 13017 / BCRC 16820 / KCTC 9966 / NRRL B-24157 / PYR-1) (Mycobacterium vanbaalenii).